Here is a 430-residue protein sequence, read N- to C-terminus: Glutamate-1-semialdehyde 2,1-aminomutase (430 aa).

Lys-268 carries the N6-(pyridoxal phosphate)lysine modification.

This sequence belongs to the class-III pyridoxal-phosphate-dependent aminotransferase family. HemL subfamily. Homodimer. It depends on pyridoxal 5'-phosphate as a cofactor.

Its subcellular location is the cytoplasm. It carries out the reaction (S)-4-amino-5-oxopentanoate = 5-aminolevulinate. It participates in porphyrin-containing compound metabolism; protoporphyrin-IX biosynthesis; 5-aminolevulinate from L-glutamyl-tRNA(Glu): step 2/2. This chain is Glutamate-1-semialdehyde 2,1-aminomutase (hemL), found in Bacillus subtilis (strain 168).